The sequence spans 199 residues: FMN-dependent NADH:quinone oxidoreductase (199 aa).

Residues Ser10, 16–18 (SVS), and 96–99 (MYNF) each bind FMN.

Belongs to the azoreductase type 1 family. As to quaternary structure, homodimer. FMN serves as cofactor.

The catalysed reaction is 2 a quinone + NADH + H(+) = 2 a 1,4-benzosemiquinone + NAD(+). The enzyme catalyses N,N-dimethyl-1,4-phenylenediamine + anthranilate + 2 NAD(+) = 2-(4-dimethylaminophenyl)diazenylbenzoate + 2 NADH + 2 H(+). Quinone reductase that provides resistance to thiol-specific stress caused by electrophilic quinones. Functionally, also exhibits azoreductase activity. Catalyzes the reductive cleavage of the azo bond in aromatic azo compounds to the corresponding amines. The polypeptide is FMN-dependent NADH:quinone oxidoreductase (Azotobacter vinelandii (strain DJ / ATCC BAA-1303)).